The chain runs to 751 residues: Semaphorin-3C (751 aa).

The N-terminal stretch at 1-21 (MAFRTICVLVGVFICSICVKG) is a signal peptide. One can recognise a Sema domain in the interval 28–511 (RVYLTFDELR…SNEGVSQVSL (484 aa)). A glycan (N-linked (GlcNAc...) asparagine) is linked at asparagine 81. A disulfide bridge connects residues cysteine 101 and cysteine 112. Asparagine 123 is a glycosylation site (N-linked (GlcNAc...) asparagine). A disulfide bridge links cysteine 130 with cysteine 139. N-linked (GlcNAc...) asparagine glycans are attached at residues asparagine 252 and asparagine 268. 2 disulfides stabilise this stretch: cysteine 266–cysteine 378 and cysteine 290–cysteine 338. N-linked (GlcNAc...) asparagine glycosylation is present at asparagine 465. Cysteines 514 and 532 form a disulfide. An Ig-like C2-type domain is found at 571–655 (AYRNAAEIVQ…TENSFKQTIA (85 aa)). N-linked (GlcNAc...) asparagine glycans are attached at residues asparagine 585 and asparagine 586. Cysteine 592 and cysteine 643 form a disulfide bridge. Basic and acidic residues predominate over residues 712-731 (TRQQHQQGDESQKMRGDYGK). Residues 712-751 (TRQQHQQGDESQKMRGDYGKLKALINSRKSRNRRNQLPES) are disordered.

It belongs to the semaphorin family. As to quaternary structure, interacts with PLXND1.

Its subcellular location is the secreted. Functionally, binds to plexin family members and plays an important role in the regulation of developmental processes. Required for normal cardiovascular development during embryogenesis. Functions as attractant for growing axons, and thereby plays an important role in axon growth and axon guidance. The protein is Semaphorin-3C (SEMA3C) of Pongo abelii (Sumatran orangutan).